The chain runs to 420 residues: Gamma-glutamyl phosphate reductase (420 aa).

Belongs to the gamma-glutamyl phosphate reductase family.

It localises to the cytoplasm. The catalysed reaction is L-glutamate 5-semialdehyde + phosphate + NADP(+) = L-glutamyl 5-phosphate + NADPH + H(+). It functions in the pathway amino-acid biosynthesis; L-proline biosynthesis; L-glutamate 5-semialdehyde from L-glutamate: step 2/2. Catalyzes the NADPH-dependent reduction of L-glutamate 5-phosphate into L-glutamate 5-semialdehyde and phosphate. The product spontaneously undergoes cyclization to form 1-pyrroline-5-carboxylate. This chain is Gamma-glutamyl phosphate reductase, found in Cereibacter sphaeroides (strain ATCC 17023 / DSM 158 / JCM 6121 / CCUG 31486 / LMG 2827 / NBRC 12203 / NCIMB 8253 / ATH 2.4.1.) (Rhodobacter sphaeroides).